Reading from the N-terminus, the 529-residue chain is uncharacterized protein (529 aa).

An N-terminal signal peptide occupies residues Met1 to Ala20.

This is an uncharacterized protein from Orgyia pseudotsugata multicapsid polyhedrosis virus (OpMNPV).